The sequence spans 186 residues: Peptidyl-tRNA hydrolase (186 aa).

Y14 provides a ligand contact to tRNA. H19 (proton acceptor) is an active-site residue. TRNA is bound by residues Y64, N66, and N112.

The protein belongs to the PTH family. As to quaternary structure, monomer.

It is found in the cytoplasm. It catalyses the reaction an N-acyl-L-alpha-aminoacyl-tRNA + H2O = an N-acyl-L-amino acid + a tRNA + H(+). Hydrolyzes ribosome-free peptidyl-tRNAs (with 1 or more amino acids incorporated), which drop off the ribosome during protein synthesis, or as a result of ribosome stalling. In terms of biological role, catalyzes the release of premature peptidyl moieties from peptidyl-tRNA molecules trapped in stalled 50S ribosomal subunits, and thus maintains levels of free tRNAs and 50S ribosomes. The protein is Peptidyl-tRNA hydrolase of Geobacillus thermodenitrificans (strain NG80-2).